A 310-amino-acid chain; its full sequence is Pantothenate kinase (310 aa).

Residue glycine 95–serine 102 participates in ATP binding.

It belongs to the prokaryotic pantothenate kinase family.

The protein localises to the cytoplasm. The enzyme catalyses (R)-pantothenate + ATP = (R)-4'-phosphopantothenate + ADP + H(+). It participates in cofactor biosynthesis; coenzyme A biosynthesis; CoA from (R)-pantothenate: step 1/5. In Mycobacteroides abscessus (strain ATCC 19977 / DSM 44196 / CCUG 20993 / CIP 104536 / JCM 13569 / NCTC 13031 / TMC 1543 / L948) (Mycobacterium abscessus), this protein is Pantothenate kinase.